The chain runs to 446 residues: Phosphoglucosamine mutase (446 aa).

Ser99 acts as the Phosphoserine intermediate in catalysis. Mg(2+) is bound by residues Ser99, Asp242, Asp244, and Asp246. The residue at position 99 (Ser99) is a Phosphoserine.

This sequence belongs to the phosphohexose mutase family. Mg(2+) serves as cofactor. In terms of processing, activated by phosphorylation.

The catalysed reaction is alpha-D-glucosamine 1-phosphate = D-glucosamine 6-phosphate. Catalyzes the conversion of glucosamine-6-phosphate to glucosamine-1-phosphate. The polypeptide is Phosphoglucosamine mutase (Campylobacter fetus subsp. fetus (strain 82-40)).